Reading from the N-terminus, the 434-residue chain is D-amino acid dehydrogenase (434 aa).

Residue 3-17 coordinates FAD; the sequence is VLVLGSGVIGTASAY.

Belongs to the DadA oxidoreductase family. Requires FAD as cofactor.

The enzyme catalyses a D-alpha-amino acid + A + H2O = a 2-oxocarboxylate + AH2 + NH4(+). Its pathway is amino-acid degradation; D-alanine degradation; NH(3) and pyruvate from D-alanine: step 1/1. Its function is as follows. Oxidative deamination of D-amino acids. This chain is D-amino acid dehydrogenase, found in Pseudomonas putida (strain GB-1).